A 125-amino-acid polypeptide reads, in one-letter code: Glycine cleavage system H protein (125 aa).

Residues 22–104 (SYVIGITDFA…YDTGWILKLE (83 aa)) enclose the Lipoyl-binding domain. An N6-lipoyllysine modification is found at Lys-63.

The protein belongs to the GcvH family. The glycine cleavage system is composed of four proteins: P, T, L and H. The cofactor is (R)-lipoate.

In terms of biological role, the glycine cleavage system catalyzes the degradation of glycine. The H protein shuttles the methylamine group of glycine from the P protein to the T protein. Functionally, is also involved in protein lipoylation via its role as an octanoyl/lipoyl carrier protein intermediate. The sequence is that of Glycine cleavage system H protein from Listeria monocytogenes serotype 4b (strain CLIP80459).